Here is a 49-residue protein sequence, read N- to C-terminus: MASHKVSLACTVCGSRNYTVTLSKDRTERLSVSKFCQHCGKHTLHQQTK.

It belongs to the bacterial ribosomal protein bL33 family.

The chain is Large ribosomal subunit protein bL33A from Leuconostoc mesenteroides subsp. mesenteroides (strain ATCC 8293 / DSM 20343 / BCRC 11652 / CCM 1803 / JCM 6124 / NCDO 523 / NBRC 100496 / NCIMB 8023 / NCTC 12954 / NRRL B-1118 / 37Y).